The following is a 103-amino-acid chain: Flagellar hook-basal body complex protein FliE (103 aa).

It belongs to the FliE family.

Its subcellular location is the bacterial flagellum basal body. In Yersinia enterocolitica serotype O:8 / biotype 1B (strain NCTC 13174 / 8081), this protein is Flagellar hook-basal body complex protein FliE.